We begin with the raw amino-acid sequence, 956 residues long: Valine--tRNA ligase (956 aa).

The 'HIGH' region signature appears at 43-53 (PNITGNLHIGH). Residues 556–560 (KMSKS) carry the 'KMSKS' region motif. Position 559 (K559) interacts with ATP. The stretch at 889–920 (PKEKELKNLNKEISKIQLAINKLQQRLSNEEF) forms a coiled coil.

Belongs to the class-I aminoacyl-tRNA synthetase family. ValS type 1 subfamily. As to quaternary structure, monomer.

It localises to the cytoplasm. The enzyme catalyses tRNA(Val) + L-valine + ATP = L-valyl-tRNA(Val) + AMP + diphosphate. Catalyzes the attachment of valine to tRNA(Val). As ValRS can inadvertently accommodate and process structurally similar amino acids such as threonine, to avoid such errors, it has a 'posttransfer' editing activity that hydrolyzes mischarged Thr-tRNA(Val) in a tRNA-dependent manner. This is Valine--tRNA ligase from Buchnera aphidicola subsp. Baizongia pistaciae (strain Bp).